The following is a 328-amino-acid chain: 4-hydroxythreonine-4-phosphate dehydrogenase (328 aa).

Substrate is bound at residue Thr-125. Residues His-160, His-203, and His-269 each contribute to the a divalent metal cation site. 3 residues coordinate substrate: Lys-277, Asn-286, and Arg-295.

The protein belongs to the PdxA family. In terms of assembly, homodimer. The cofactor is a divalent metal cation.

Its subcellular location is the cytoplasm. The enzyme catalyses 4-(phosphooxy)-L-threonine + NAD(+) = 3-amino-2-oxopropyl phosphate + CO2 + NADH. Its pathway is cofactor biosynthesis; pyridoxine 5'-phosphate biosynthesis; pyridoxine 5'-phosphate from D-erythrose 4-phosphate: step 4/5. Catalyzes the NAD(P)-dependent oxidation of 4-(phosphooxy)-L-threonine (HTP) into 2-amino-3-oxo-4-(phosphooxy)butyric acid which spontaneously decarboxylates to form 3-amino-2-oxopropyl phosphate (AHAP). The protein is 4-hydroxythreonine-4-phosphate dehydrogenase of Synechococcus sp. (strain RCC307).